Reading from the N-terminus, the 319-residue chain is ATP-dependent 6-phosphofructokinase (319 aa).

Residue G11 participates in ATP binding. Residue R21–R25 coordinates ADP. Residues R72–C73 and G102–S105 each bind ATP. D103 contacts Mg(2+). Substrate is bound at residue T125 to D127. The active-site Proton acceptor is the D127. R154 lines the ADP pocket. Substrate-binding positions include R162 and M169–R171. ADP-binding positions include G185 to E187, R211, and K213 to H215. Substrate-binding positions include E222, R243, and H249–R252.

Belongs to the phosphofructokinase type A (PFKA) family. ATP-dependent PFK group I subfamily. Prokaryotic clade 'B1' sub-subfamily. In terms of assembly, homotetramer. Mg(2+) is required as a cofactor.

Its subcellular location is the cytoplasm. The catalysed reaction is beta-D-fructose 6-phosphate + ATP = beta-D-fructose 1,6-bisphosphate + ADP + H(+). The protein operates within carbohydrate degradation; glycolysis; D-glyceraldehyde 3-phosphate and glycerone phosphate from D-glucose: step 3/4. Allosterically activated by ADP and other diphosphonucleosides, and allosterically inhibited by phosphoenolpyruvate. Functionally, catalyzes the phosphorylation of D-fructose 6-phosphate to fructose 1,6-bisphosphate by ATP, the first committing step of glycolysis. The protein is ATP-dependent 6-phosphofructokinase of Macrococcus caseolyticus (strain JCSC5402) (Macrococcoides caseolyticum).